We begin with the raw amino-acid sequence, 300 residues long: Tegument protein VP22 (300 aa).

Residues 1–148 form a disordered region; sequence MTSRRSVKSC…PARGRRPAQA (148 aa). 2 stretches are compositionally biased toward basic and acidic residues: residues 10–22 and 50–61; these read CPREAPRGTHEEL and PRGEVRFLHYDE. Positions 163–166 match the Nuclear localization signal motif; it reads GRTK. The segment at 174–267 is interaction with gE; the sequence is KKLHFSTAPP…LVNPDAAQDV (94 aa). A Nuclear export signal motif is present at residues 232–244; it reads LNELLDLTTIRVT. Low complexity predominate over residues 269 to 292; that stretch reads ATAAARGRPAGRAAATARAPARSA. The interval 269-300 is disordered; the sequence is ATAAARGRPAGRAAATARAPARSASRPRRPLE.

This sequence belongs to the alphaherpesvirinae VP22 tegument protein family. In terms of assembly, interacts with gE (via C-terminus); this interaction is necessary for the recruitment of VP22 to the Golgi and its packaging into virions. Interacts with gM (via C-terminus). Interacts with VP16; this interaction allows the formation of a tripartite complex composed of VP16, VP22 and UL41/VHS. Interacts with the capsid-binding protein UL16. Interacts with host CGAS. Post-translationally, highly phosphorylated in the host cell. Packaging is selective for underphosphorylated forms.

The protein localises to the virion tegument. Its subcellular location is the host cytoplasm. It is found in the host nucleus. The protein resides in the host Golgi apparatus. Functionally, tegument protein that plays different roles during the time course of infection. Participates in both the accumulation of viral mRNAs and viral protein translation at late time of infection. Modulates the RNase activity of the virion host shutoff protein UL41 probably to ensure necessary levels of key cellular mRNAs and proteins. Plays a role in microtubule reorganization that occurs after viral infection by stabilizing microtubule network. Plays a role in the inhibition of host innate immune system by targeting the CGAS enzymatic activity which is the principal cytosolic DNA sensor that detects invading viral DNA. Acts by mediating disruption of liquid-like droplets in which CGAS is activated, thereby preventing CGAS activity. This Homo sapiens (Human) protein is Tegument protein VP22.